The following is a 561-amino-acid chain: Interleukin-1 receptor-like 2 (561 aa).

Residues 1-21 (MGMPPLLFCWVSFVLPLFVAA) form the signal peptide. 3 Ig-like C2-type domains span residues 22–113 (GNCT…INLT), 128–215 (SINS…VRNY), and 225–321 (SGGR…TCHA). The Extracellular portion of the chain corresponds to 22–338 (GNCTDVYMHH…ILKRPAPDFR (317 aa)). N-linked (GlcNAc...) asparagine glycosylation is found at N23, N43, N55, N111, and N130. C44 and C97 are oxidised to a cystine. C149 and C199 are disulfide-bonded. Residues N231, N237, N253, N269, N290, and N302 are each glycosylated (N-linked (GlcNAc...) asparagine). C252 and C319 are joined by a disulfide. Residues 339-358 (AYLIGGLMAFLLLAVSILYI) form a helical membrane-spanning segment. The Cytoplasmic portion of the chain corresponds to 359–561 (YNTFKVDIVL…LLGHTPRIPG (203 aa)). The TIR domain maps to 384–539 (KLYDAYVLYP…KFWKKVRYHM (156 aa)). E470 is an active-site residue.

The protein belongs to the interleukin-1 receptor family. Interacts with IL1RAP; the association is enhanced by IL36B indicative for an functional signaling complex and inhibited by IL36RN. In terms of tissue distribution, predominant expression in the lung and epididymis, with lower expression in cerebral cortex and testis. Expression in the brain is non-neuronal and associated with the cerebral vasculature. Not detected in any cell line tested.

Its subcellular location is the membrane. It catalyses the reaction NAD(+) + H2O = ADP-D-ribose + nicotinamide + H(+). Its function is as follows. Receptor for interleukin-36 (IL36A, IL36B and IL36G). After binding to interleukin-36 associates with the coreceptor IL1RAP to form the interleukin-36 receptor complex which mediates interleukin-36-dependent activation of NF-kappa-B, MAPK and other pathways. The IL-36 signaling system is thought to be present in epithelial barriers and to take part in local inflammatory response; it is similar to the IL-1 system. Seems to be involved in skin inflammatory response by induction of the IL-23/IL-17/IL-22 pathway. Receptor for the interleukin IL36G. Binding to the agonist leads to the activation of NF-kappa-B. This is Interleukin-1 receptor-like 2 (Il1rl2) from Rattus norvegicus (Rat).